The chain runs to 386 residues: Succinate--CoA ligase [ADP-forming] subunit beta (386 aa).

The region spanning 9 to 244 (KEILRSYGVS…LDEEDPKEVE (236 aa)) is the ATP-grasp domain. Residues lysine 46, 53–55 (GRG), glutamate 99, cysteine 102, and glutamate 107 contribute to the ATP site. Mg(2+) is bound by residues asparagine 199 and aspartate 213. Substrate is bound by residues asparagine 264 and 321–323 (GIM).

Belongs to the succinate/malate CoA ligase beta subunit family. As to quaternary structure, heterotetramer of two alpha and two beta subunits. The cofactor is Mg(2+).

It carries out the reaction succinate + ATP + CoA = succinyl-CoA + ADP + phosphate. The enzyme catalyses GTP + succinate + CoA = succinyl-CoA + GDP + phosphate. The protein operates within carbohydrate metabolism; tricarboxylic acid cycle; succinate from succinyl-CoA (ligase route): step 1/1. In terms of biological role, succinyl-CoA synthetase functions in the citric acid cycle (TCA), coupling the hydrolysis of succinyl-CoA to the synthesis of either ATP or GTP and thus represents the only step of substrate-level phosphorylation in the TCA. The beta subunit provides nucleotide specificity of the enzyme and binds the substrate succinate, while the binding sites for coenzyme A and phosphate are found in the alpha subunit. The sequence is that of Succinate--CoA ligase [ADP-forming] subunit beta from Geobacillus kaustophilus (strain HTA426).